Consider the following 1124-residue polypeptide: Probable leucine-rich repeat receptor-like protein kinase At2g33170 (1124 aa).

Positions 1–32 (MGWWIFEFKKESKSMFVGVLFLLTLLVWTSES) are cleaved as a signal peptide. The Extracellular portion of the chain corresponds to 33–752 (LNSDGQFLLE…LKAGSARRGR (720 aa)). N-linked (GlcNAc...) asparagine glycans are attached at residues Asn-72, Asn-96, and Asn-131. LRR repeat units follow at residues 86 to 109 (VVTS…GGLV), 110 to 132 (NLVY…IGNC), 134 to 156 (KLEV…INKL), 158 to 180 (QLRS…IGDL), 182 to 205 (NLEE…GNLN), 206 to 228 (KLTT…IGKC), 230 to 252 (NLKL…IGML), 254 to 277 (KLQE…GNLT), 278 to 300 (SLET…IGNM), 302 to 325 (SLKK…GKLS), 326 to 348 (KVME…LSKI), 350 to 371 (ELRL…ELSK), 374 to 397 (NLAK…QNLT), 398 to 420 (SMRQ…LGLY), 422 to 444 (PLWV…ICQQ), 446 to 468 (NLIL…VLRC), 470 to 491 (SLLQ…ELCK), 494 to 516 (NLSA…IGTC), 518 to 540 (KLQR…ISKL), 542 to 564 (NLVT…IANC), 566 to 588 (MLQR…LGSL), 590 to 613 (QLEI…GNLT), 614 to 636 (HLTE…LGLL), 638 to 661 (SLQI…IGNL), 663 to 686 (LLMY…ENLS), and 687 to 709 (SLLG…QIFQ). Asn-192 is a glycosylation site (N-linked (GlcNAc...) asparagine). Asn-275 is a glycosylation site (N-linked (GlcNAc...) asparagine). Asn-314 is a glycosylation site (N-linked (GlcNAc...) asparagine). N-linked (GlcNAc...) asparagine glycosylation is present at Asn-395. Asn-494 carries an N-linked (GlcNAc...) asparagine glycan. Asn-547 is a glycosylation site (N-linked (GlcNAc...) asparagine). Residue Asn-611 is glycosylated (N-linked (GlcNAc...) asparagine). N-linked (GlcNAc...) asparagine glycosylation is found at Asn-644, Asn-684, Asn-692, Asn-697, and Asn-710. The chain crosses the membrane as a helical span at residues 753 to 773 (IIIIVSSVIGGISLLLIAIVV). Topologically, residues 774–1124 (HFLRNPVEPT…CSDLPPPAPP (351 aa)) are cytoplasmic. Phosphothreonine is present on residues Thr-808 and Thr-816. The Protein kinase domain occupies 819-1100 (FHDSYIVGRG…TMREVVLMLI (282 aa)). Residues 825–833 (VGRGACGTV) and Lys-847 each bind ATP. A phosphotyrosine mark is found at Tyr-901 and Tyr-939. Asp-952 serves as the catalytic Proton acceptor. The residue at position 986 (Ser-986) is a Phosphoserine. A phosphotyrosine mark is found at Tyr-994 and Tyr-1001. Phosphothreonine is present on Thr-1002.

The protein belongs to the protein kinase superfamily. Ser/Thr protein kinase family.

Its subcellular location is the membrane. It carries out the reaction L-seryl-[protein] + ATP = O-phospho-L-seryl-[protein] + ADP + H(+). The catalysed reaction is L-threonyl-[protein] + ATP = O-phospho-L-threonyl-[protein] + ADP + H(+). This chain is Probable leucine-rich repeat receptor-like protein kinase At2g33170, found in Arabidopsis thaliana (Mouse-ear cress).